We begin with the raw amino-acid sequence, 273 residues long: NADPH-dependent 7-cyano-7-deazaguanine reductase (273 aa).

A substrate-binding site is contributed by 80-82 (VES). Residue 82–83 (SK) participates in NADPH binding. The active-site Thioimide intermediate is cysteine 180. The active-site Proton donor is aspartate 187. A substrate-binding site is contributed by 219–220 (HE). 248-249 (RG) is a binding site for NADPH.

Belongs to the GTP cyclohydrolase I family. QueF type 2 subfamily. In terms of assembly, homodimer.

It localises to the cytoplasm. It carries out the reaction 7-aminomethyl-7-carbaguanine + 2 NADP(+) = 7-cyano-7-deazaguanine + 2 NADPH + 3 H(+). Its pathway is tRNA modification; tRNA-queuosine biosynthesis. Catalyzes the NADPH-dependent reduction of 7-cyano-7-deazaguanine (preQ0) to 7-aminomethyl-7-deazaguanine (preQ1). The chain is NADPH-dependent 7-cyano-7-deazaguanine reductase from Bordetella parapertussis (strain 12822 / ATCC BAA-587 / NCTC 13253).